The sequence spans 420 residues: Argininosuccinate synthase (420 aa).

ATP is bound by residues 9-17 (AYSGGLDTS) and Ala35. Residues Tyr86 and Ser91 each contribute to the L-citrulline site. 114–122 (SHGCTGKGN) is an ATP binding site. The L-aspartate site is built by Thr118, Asn122, and Asp123. Residue Asn122 participates in L-citrulline binding. L-citrulline contacts are provided by Arg126, Ser179, Ser188, Glu273, and Tyr285.

The protein belongs to the argininosuccinate synthase family. Type 1 subfamily. Homotetramer.

It is found in the cytoplasm. It carries out the reaction L-citrulline + L-aspartate + ATP = 2-(N(omega)-L-arginino)succinate + AMP + diphosphate + H(+). It participates in amino-acid biosynthesis; L-arginine biosynthesis; L-arginine from L-ornithine and carbamoyl phosphate: step 2/3. In terms of biological role, catalyzes the eighth step in arginine biosynthesis. Also has a catabolic function as the first enzyme of citrulline utilization as nitrogen source via arginine and the reactions involved in the arginase pathway. The sequence is that of Argininosuccinate synthase (ARG1) from Saccharomyces cerevisiae (strain ATCC 204508 / S288c) (Baker's yeast).